Consider the following 403-residue polypeptide: Argininosuccinate synthase (403 aa).

Residues 12–20 (AYSGGLDTS) and A39 each bind ATP. Y91 and S96 together coordinate L-citrulline. G121 serves as a coordination point for ATP. The L-aspartate site is built by T123, N127, and D128. N127 serves as a coordination point for L-citrulline. Positions 131, 180, 189, 265, and 277 each coordinate L-citrulline.

Belongs to the argininosuccinate synthase family. Type 1 subfamily. In terms of assembly, homotetramer.

Its subcellular location is the cytoplasm. The catalysed reaction is L-citrulline + L-aspartate + ATP = 2-(N(omega)-L-arginino)succinate + AMP + diphosphate + H(+). Its pathway is amino-acid biosynthesis; L-arginine biosynthesis; L-arginine from L-ornithine and carbamoyl phosphate: step 2/3. This is Argininosuccinate synthase from Vibrio vulnificus (strain CMCP6).